An 853-amino-acid polypeptide reads, in one-letter code: Vacuolar protein sorting-associated protein 41 homolog (853 aa).

Acidic residues predominate over residues 1-25; sequence MAEAEEQETESLEESTDESEEESEE. The segment at 1-32 is disordered; that stretch reads MAEAEEQETESLEESTDESEEESEEEPKLKYE. The segment at 1–539 is interaction with ARL8B; it reads MAEAEEQETE…YLTLRHKDVF (539 aa). A CHCR repeat occupies 567–711; the sequence is VDMLLDNEDK…SIDKPPFITG (145 aa). The segment at 790 to 838 adopts an RING-type; atypical zinc-finger fold; that stretch reads CESCLSPILPTDAAKPFSVVVFHCRHMFHKECLPMPSMNAPAQYCNICS.

It belongs to the VPS41 family. Component of the putative homotypic fusion and vacuole protein sorting (HOPS) complex; the core of which composed of the class C Vps proteins VPS11, VPS16, VPS18 and VPS33A, is associated with VPS39 and VPS41. Interacts with RILP, MON1B. Interacts with ARL8B (GTP-bound form); involved in recruitment to lysosomes and probably hierarchial assembly of the HOPS complex at lysosomal membranes. In vitro can self-assemble into a lattice. Associates with adapter protein complex 3 (AP-3) and clathrin:AP-3 complexes. Interacts with STX17; this interaction is increased in the absence of TMEM39A. Interacts with ARL8B and PLEKHM1; the interaction mediates the recruitment of the HOPS complex to lysosomes. Interacts with RAB7, RAB2A and RAB2B. Interacts with RAB39A (GTP-bound) and RAB39B (GTP-bound); interaction with RAB39A leads to a functional HOPS complex that mediates autophagosome-lysosome membrane tethering.

The protein resides in the endosome membrane. Its subcellular location is the late endosome membrane. The protein localises to the early endosome membrane. It localises to the lysosome membrane. It is found in the golgi apparatus. The protein resides in the trans-Golgi network. Its subcellular location is the cytoplasmic vesicle. The protein localises to the clathrin-coated vesicle. It localises to the cytoplasm. It is found in the cytosol. Plays a role in vesicle-mediated protein trafficking to lysosomal compartments including the endocytic membrane transport and autophagic pathways. Believed to act in part as a core component of the putative HOPS endosomal tethering complex is proposed to be involved in the Rab5-to-Rab7 endosome conversion probably implicating MON1A/B, and via binding SNAREs and SNARE complexes to mediate tethering and docking events during SNARE-mediated membrane fusion. The HOPS complex is proposed to be recruited to Rab7 on the late endosomal membrane and to regulate late endocytic, phagocytic and autophagic traffic towards lysosomes. Involved in homotypic vesicle fusions between late endosomes and in heterotypic fusions between late endosomes and lysosomes implicated in degradation of endocytosed cargo. Required for fusion of autophagosomes with lysosomes. Links the HOPS complex to endosomal via its association with RILP and to lysosomal membranes via its association with ARL8B, suggesting that these interactions may bring the compartments to close proximity for fusion. Involved in the direct trans-Golgi network to late endosomes transport of lysosomal membrane proteins independently of HOPS. Involved in sorting to the regulated secretory pathway presumably implicating the AP-3 adapter complex. May play a role in HOPS-independent function in the regulated secretory pathway. The polypeptide is Vacuolar protein sorting-associated protein 41 homolog (Vps41) (Mus musculus (Mouse)).